A 201-amino-acid chain; its full sequence is Dephospho-CoA kinase (201 aa).

One can recognise a DPCK domain in the interval 4–201 (TIGLTGGIAS…ILKQWDALEK (198 aa)). 12–17 (ASGKST) is a binding site for ATP.

The protein belongs to the CoaE family.

It is found in the cytoplasm. The catalysed reaction is 3'-dephospho-CoA + ATP = ADP + CoA + H(+). Its pathway is cofactor biosynthesis; coenzyme A biosynthesis; CoA from (R)-pantothenate: step 5/5. Its function is as follows. Catalyzes the phosphorylation of the 3'-hydroxyl group of dephosphocoenzyme A to form coenzyme A. This chain is Dephospho-CoA kinase, found in Geobacillus kaustophilus (strain HTA426).